Consider the following 206-residue polypeptide: GTP cyclohydrolase 1 (206 aa).

Zn(2+)-binding residues include Cys98, His101, and Cys169.

It belongs to the GTP cyclohydrolase I family. In terms of assembly, toroid-shaped homodecamer, composed of two pentamers of five dimers.

It catalyses the reaction GTP + H2O = 7,8-dihydroneopterin 3'-triphosphate + formate + H(+). It functions in the pathway cofactor biosynthesis; 7,8-dihydroneopterin triphosphate biosynthesis; 7,8-dihydroneopterin triphosphate from GTP: step 1/1. The polypeptide is GTP cyclohydrolase 1 (Helicobacter hepaticus (strain ATCC 51449 / 3B1)).